Consider the following 70-residue polypeptide: U2-agatoxin-Ao1m (70 aa).

A signal peptide spans 1 to 20 (MRAIISLFLISAMVFSMIQA). The propeptide occupies 21–34 (VPEEXGLQLSEDER). Disulfide bonds link C37-C53, C44-C58, and C52-C68. Residue L69 is modified to Leucine amide.

Belongs to the neurotoxin 01 (U2-agtx) family. Expressed by the venom gland.

It localises to the secreted. Insect active toxin causing rapid but reversible paralysis in crickets. No activity shown in mammals. Does not show effect on mammalian voltage-gated calcium channels. This chain is U2-agatoxin-Ao1m, found in Agelena orientalis (Funnel-web spider).